We begin with the raw amino-acid sequence, 923 residues long: DNA mismatch repair protein MutS (923 aa).

671 to 678 lines the ATP pocket; it reads GPNMAGKS.

This sequence belongs to the DNA mismatch repair MutS family.

Functionally, this protein is involved in the repair of mismatches in DNA. It is possible that it carries out the mismatch recognition step. This protein has a weak ATPase activity. The sequence is that of DNA mismatch repair protein MutS from Rhodopseudomonas palustris (strain BisB5).